The chain runs to 775 residues: DNA polymerase (775 aa).

The protein belongs to the DNA polymerase type-B family. Monomer.

It carries out the reaction DNA(n) + a 2'-deoxyribonucleoside 5'-triphosphate = DNA(n+1) + diphosphate. Its function is as follows. In addition to polymerase activity, this DNA polymerase exhibits 3' to 5' exonuclease activity. The sequence is that of DNA polymerase (pol) from Pyrococcus glycovorans.